Here is a 596-residue protein sequence, read N- to C-terminus: MLTFNDNKAGMNGLDKEKITKVIEENTSASYSSFSKKQQSRIEEKVLEIKNRLQTATREERQKSEILMENLEMKLESSRDLSRDCVCIDMDAYFAAVEMRDNPALRTVPMAVGSSAMLSTSNYLARRFGVRAGMPGFISNKLCPSLTIVPGNYPKYTKVSRQFSQIFMEYDSDVGMMSLDEAFIDLTDYVASNTEKKTFKRHRFGGDCPCWLPRFDENENTLEDLKIEESICPKCEKSRKIYYDHVEFGTGREEAVREIRFRVEQLTGLTCSAGIASNFMLAKICSDLNKPNGQYVLENDKNAIMEFLKDLPIRKVGGIGRVCEAQLKAMDIQTVGDMNLKKNLYPLCFTPLSQESFLRTALGLPGRPSESDPRRKSISVERTFSPTSDFNILLEEHQEICRMLEEDVRKSGIVGGKTVTLKLKLSSFDVLTRSLTPSDVVKSLEDIQKFSLELLEKEKGKEIRLLGVRLSQLIFEEDEKKRSKTITEFWNEKKLQIQNLQGSENVDDDDVIMMDTRPCPICGTDVENRLDVMNCHVDECILKVQNDDGPELICVSVENKSTQKPERPSTKKRKLQEKRPKAKKMVTIDSFWKKSG.

One can recognise a UmuC domain in the interval 85–320 (CVCIDMDAYF…LPIRKVGGIG (236 aa)). Residues D89 and D180 each contribute to the Mg(2+) site. Residue E181 is part of the active site. The segment at 516 to 545 (TRPCPICGTDVENRLDVMNCHVDECILKVQ) adopts a UBZ4-type zinc-finger fold. Zn(2+)-binding residues include C519, C522, H536, and C540. Residues 559-584 (NKSTQKPERPSTKKRKLQEKRPKAKK) form a disordered region. Residues 570-584 (TKKRKLQEKRPKAKK) are compositionally biased toward basic residues.

It belongs to the DNA polymerase type-Y family. Requires Mg(2+) as cofactor. The cofactor is Mn(2+).

The protein localises to the nucleus. It catalyses the reaction DNA(n) + a 2'-deoxyribonucleoside 5'-triphosphate = DNA(n+1) + diphosphate. Its function is as follows. DNA polymerase specifically involved in DNA repair. Plays an important role in translesion synthesis, where the normal high-fidelity DNA polymerases cannot proceed and DNA synthesis stalls. Depending on the context, it inserts the correct base, but causes frequent base transitions, transversions and frameshifts. Lacks 3'-5' proofreading exonuclease activity. Forms a Schiff base with 5'-deoxyribose phosphate at abasic sites, but does not have lyase activity. This chain is DNA polymerase kappa (polk-1), found in Caenorhabditis elegans.